A 352-amino-acid chain; its full sequence is Tropomodulin-3 (352 aa).

Position 25 is a phosphoserine (S25).

This sequence belongs to the tropomodulin family. Binds to the N-terminus of tropomyosin and to actin. Interacts with FLII. As to expression, ubiquitous.

The protein resides in the cytoplasm. It localises to the cytoskeleton. In terms of biological role, blocks the elongation and depolymerization of the actin filaments at the pointed end. The Tmod/TM complex contributes to the formation of the short actin protofilament, which in turn defines the geometry of the membrane skeleton. The polypeptide is Tropomodulin-3 (TMOD3) (Homo sapiens (Human)).